The following is a 1044-amino-acid chain: Elongation factor 3B (1044 aa).

S2 is modified (N-acetylserine). Residues Q5 to I42 form an HEAT 1 repeat. 3 residues coordinate ADP: I42, H44, and S83. HEAT repeat units lie at residues P86–P123, V124–E162, L166–N203, D205–P241, A242–D279, and P285–V323. Residues K187 and K196 each carry the N6,N6,N6-trimethyllysine modification. Residues T392, H396, and E397 each contribute to the ADP site. ABC transporter domains are found at residues D426–L641 and V667–E993. N703 contacts ADP. At K789 the chain carries N6,N6,N6-trimethyllysine. ADP is bound by residues E922, N925, and H951. T972 carries the post-translational modification Phosphothreonine. At S974 the chain carries Phosphoserine. The disordered stretch occupies residues G975–F1044. Basic and acidic residues predominate over residues R987 to D999. Over residues R1020–K1031 the composition is skewed to basic residues. Residues S1039 and S1040 each carry the phosphoserine modification.

The protein belongs to the ABC transporter superfamily. ABCF family. EF3 subfamily. As to quaternary structure, monomer.

Its subcellular location is the cytoplasm. The catalysed reaction is ATP + H2O = ADP + phosphate + H(+). The protein operates within protein biosynthesis; polypeptide chain elongation. Functionally, ribosome-dependent ATPase that promotes the translation of proteins required for detoxification of reactive oxygen species. Required for the ATP-dependent release of deacylated tRNA from the ribosomal E-site during protein biosynthesis. Stimulates the eEF1A-dependent binding of aminoacyl-tRNA to the ribosomal A-site, which has reduced affinity for tRNA as long as the E-site is occupied. Assists translation termination by stimulating the release of nascent protein from the ribosome by release factors. This Saccharomyces cerevisiae (strain ATCC 204508 / S288c) (Baker's yeast) protein is Elongation factor 3B.